We begin with the raw amino-acid sequence, 268 residues long: Lectin ESA-2 (268 aa).

Tandem repeats lie at residues 1-67 (GRYT…RRGE), 68-135 (SNVY…QSGG), 136-202 (DTYN…LSGA), and 203-268 (NNYS…VATS). A 4 X approximate tandem repeats region spans residues 1–268 (GRYTVQNQWG…PIGFKGVATS (268 aa)).

As to quaternary structure, monomer.

Its function is as follows. Lectin specific for high mannose N-glycans, recognizes the branched moiety of these glycans. Does not recognize other types of N-glycans or monosaccharides. Agglutinates trypsin-treated sheep and rabbit erythrocytes and untreated sheep erythrocytes. Has mitogenic activity on mouse lymphocytes. Does not require metal ions for activity. The sequence is that of Lectin ESA-2 from Eucheuma serra (Marine red alga).